An 88-amino-acid polypeptide reads, in one-letter code: Stannin (88 aa).

Residues 1-10 (MSIMDHSPTT) lie on the Mitochondrial intermembrane side of the membrane. The chain crosses the membrane as a helical span at residues 11–31 (GVVTVIVILIAIAALGALILG). Residues 32-88 (CWCYLRLQRISQSEDEESIVGDGETKEPFLLVQYSAKGPCVERKAKLMTANSPEVHG) are Cytoplasmic-facing. Phosphoserine is present on residues S49 and S83.

Belongs to the stannin family. Monomer.

It localises to the mitochondrion outer membrane. Functionally, plays a role in the toxic effects of organotins. Plays a role in endosomal maturation. The sequence is that of Stannin (Snn) from Mus musculus (Mouse).